The following is a 173-amino-acid chain: Large ribosomal subunit protein uL10 (173 aa).

This sequence belongs to the universal ribosomal protein uL10 family. As to quaternary structure, part of the ribosomal stalk of the 50S ribosomal subunit. The N-terminus interacts with L11 and the large rRNA to form the base of the stalk. The C-terminus forms an elongated spine to which L12 dimers bind in a sequential fashion forming a multimeric L10(L12)X complex.

Forms part of the ribosomal stalk, playing a central role in the interaction of the ribosome with GTP-bound translation factors. In Oleidesulfovibrio alaskensis (strain ATCC BAA-1058 / DSM 17464 / G20) (Desulfovibrio alaskensis), this protein is Large ribosomal subunit protein uL10.